A 148-amino-acid polypeptide reads, in one-letter code: Nucleoside diphosphate kinase (148 aa).

ATP contacts are provided by lysine 9, phenylalanine 57, arginine 85, threonine 91, arginine 102, and asparagine 112. The residue at position 91 (threonine 91) is a Phosphothreonine. The active-site Pros-phosphohistidine intermediate is histidine 115. Residue serine 122 is modified to Phosphoserine.

This sequence belongs to the NDK family. As to quaternary structure, homotetramer. The cofactor is Mg(2+).

The protein localises to the cytoplasm. The enzyme catalyses a 2'-deoxyribonucleoside 5'-diphosphate + ATP = a 2'-deoxyribonucleoside 5'-triphosphate + ADP. It catalyses the reaction a ribonucleoside 5'-diphosphate + ATP = a ribonucleoside 5'-triphosphate + ADP. Major role in the synthesis of nucleoside triphosphates other than ATP. The ATP gamma phosphate is transferred to the NDP beta phosphate via a ping-pong mechanism, using a phosphorylated active-site intermediate. The sequence is that of Nucleoside diphosphate kinase from Bacillus cereus (strain ATCC 14579 / DSM 31 / CCUG 7414 / JCM 2152 / NBRC 15305 / NCIMB 9373 / NCTC 2599 / NRRL B-3711).